Reading from the N-terminus, the 380-residue chain is Probable protein phosphatase 2C 2 (380 aa).

A PPM-type phosphatase domain is found at 122–376 (GYSVYCKRGK…DDISVMLIQL (255 aa)). 4 residues coordinate Mn(2+): Asp158, Gly159, Asp321, and Asp367.

The protein belongs to the PP2C family. Mg(2+) is required as a cofactor. It depends on Mn(2+) as a cofactor.

The enzyme catalyses O-phospho-L-seryl-[protein] + H2O = L-seryl-[protein] + phosphate. The catalysed reaction is O-phospho-L-threonyl-[protein] + H2O = L-threonyl-[protein] + phosphate. The chain is Probable protein phosphatase 2C 2 from Arabidopsis thaliana (Mouse-ear cress).